Consider the following 420-residue polypeptide: UDP-N-acetylglucosamine 1-carboxyvinyltransferase 2 (420 aa).

22-23 (KN) contacts phosphoenolpyruvate. Residue Arg92 coordinates UDP-N-acetyl-alpha-D-glucosamine. The active-site Proton donor is Cys116. The residue at position 116 (Cys116) is a 2-(S-cysteinyl)pyruvic acid O-phosphothioketal. UDP-N-acetyl-alpha-D-glucosamine contacts are provided by residues 121 to 125 (RPIDL), Asp307, and Ile329.

Belongs to the EPSP synthase family. MurA subfamily.

The protein localises to the cytoplasm. The enzyme catalyses phosphoenolpyruvate + UDP-N-acetyl-alpha-D-glucosamine = UDP-N-acetyl-3-O-(1-carboxyvinyl)-alpha-D-glucosamine + phosphate. It functions in the pathway cell wall biogenesis; peptidoglycan biosynthesis. Functionally, cell wall formation. Adds enolpyruvyl to UDP-N-acetylglucosamine. The chain is UDP-N-acetylglucosamine 1-carboxyvinyltransferase 2 from Streptococcus thermophilus (strain ATCC BAA-250 / LMG 18311).